Consider the following 256-residue polypeptide: 5-oxoprolinase subunit A (256 aa).

Belongs to the LamB/PxpA family. In terms of assembly, forms a complex composed of PxpA, PxpB and PxpC.

The enzyme catalyses 5-oxo-L-proline + ATP + 2 H2O = L-glutamate + ADP + phosphate + H(+). In terms of biological role, catalyzes the cleavage of 5-oxoproline to form L-glutamate coupled to the hydrolysis of ATP to ADP and inorganic phosphate. The chain is 5-oxoprolinase subunit A from Alkaliphilus metalliredigens (strain QYMF).